A 762-amino-acid polypeptide reads, in one-letter code: MSDASKRSLNPTLMMNNNNTLPKPLEESLDLKEFIALFKTFFAKERGSIALENDLKQAFTYLNEVDAIGLPAPKSVKESDLIVVKLTKLGTLHLDEIYEIVKRLRYIVVLQNAFKPFTHLKFHERLNAIILPPFFNDLILLLDDEGQIKQGANATLDALNESLNRLKKESTKIIHHYAHSKELAPYLVDTQSHLKHGYECLLLKSGFSSAIKGVVLERSANGYFYLLPESAQKIAQKIAQIGNEIDCCIVEMCQTLSRSLQKHLLFLKFLFKEFDFLDSLQARLNFAKAYNLEFVMPSFTQKKMILENFSHPILKEPKPLNLKFEKSMLAVTGVNAGGKTMLLKSLLSAAFLSKHLIPMKINAHHSTIPYFREIHAIINDPQNSANNISTFAGRMKQFSALLSKENMLLGVDEIELGTDADEASSLYKTLLEKLLKQNNQIVITTHHKRLSVLMAENKEVELLAALYDEEKERPTYTFLKGVIGKSYAFETALRYGVPPFLIEKAKAFYGEDKEKLNVLIENSSTLERELKQKNEHLENALKEQEDLKNAWLLEMEKQKEIFHHKKLELEKSYQQALNILKSEVASKDTSSMHKEIHKASEILNKHKTDQEIPQIITSFQINEKARYKNESVLVIQILDKGYYLVETELGMRLKAHGSWLKQIQKPPKNKFKPPKTIVPKPKEASLRLDLRGQRSEEALDLLDAFLNDALLGGFEEVLICHGKGSGILEKFVKEFLKNHPKVVSFSDAPINLGGSGVKIVKL.

Residue 333-340 participates in ATP binding; it reads GVNAGGKT. The 75-residue stretch at 688-762 folds into the Smr domain; that stretch reads LDLRGQRSEE…GGSGVKIVKL (75 aa).

It belongs to the DNA mismatch repair MutS family. MutS2 subfamily. As to quaternary structure, homodimer. Binds to stalled ribosomes, contacting rRNA.

Functionally, endonuclease that is involved in the suppression of homologous recombination and thus may have a key role in the control of bacterial genetic diversity. Its function is as follows. Acts as a ribosome collision sensor, splitting the ribosome into its 2 subunits. Detects stalled/collided 70S ribosomes which it binds and splits by an ATP-hydrolysis driven conformational change. Acts upstream of the ribosome quality control system (RQC), a ribosome-associated complex that mediates the extraction of incompletely synthesized nascent chains from stalled ribosomes and their subsequent degradation. Probably generates substrates for RQC. The polypeptide is Endonuclease MutS2 (Helicobacter pylori (strain J99 / ATCC 700824) (Campylobacter pylori J99)).